A 256-amino-acid chain; its full sequence is Distal membrane-arm assembly complex protein 2 (256 aa).

Ser-252 bears the Phosphoserine mark.

Belongs to the ATP synthase subunit s family. Interacts with incompletely assembled mitochondrial NADH:ubiquinone oxidoreductase complex (complex I).

The protein localises to the mitochondrion. Functionally, required for the assembly of the mitochondrial NADH:ubiquinone oxidoreductase complex (complex I). Involved in the assembly of the distal region of complex I. The protein is Distal membrane-arm assembly complex protein 2 of Macaca fascicularis (Crab-eating macaque).